The following is a 70-amino-acid chain: Small ribosomal subunit protein bS21 (70 aa).

This sequence belongs to the bacterial ribosomal protein bS21 family.

This Polaromonas naphthalenivorans (strain CJ2) protein is Small ribosomal subunit protein bS21.